Here is a 198-residue protein sequence, read N- to C-terminus: MNKKKKSIVIFTGPSGVGKGTVEQLVFNYDELNLSLSCSATTRSPRGGETNGIHYYFISKEEFKDRIKNKKFLEHSFHFDNYYGTLYSELDNIIARNKVPFLEIETNGAKIIAQKMQKLKNPPYNLITIFLSPPSITDIYKRIKNRGTENAQTIKNRVNKAKEELLEAGNFKYVVYNDRPERAAQEIREILHKELDID.

Residues 6–192 (KSIVIFTGPS…AAQEIREILH (187 aa)) enclose the Guanylate kinase-like domain. 13 to 20 (GPSGVGKG) contacts ATP.

Belongs to the guanylate kinase family.

It is found in the cytoplasm. The catalysed reaction is GMP + ATP = GDP + ADP. Functionally, essential for recycling GMP and indirectly, cGMP. The polypeptide is Guanylate kinase (Mycoplasmopsis synoviae (strain 53) (Mycoplasma synoviae)).